Consider the following 367-residue polypeptide: Alanine racemase (367 aa).

The active-site Proton acceptor; specific for D-alanine is the K35. N6-(pyridoxal phosphate)lysine is present on K35. R130 is a binding site for substrate. The Proton acceptor; specific for L-alanine role is filled by Y259. M307 provides a ligand contact to substrate.

This sequence belongs to the alanine racemase family. Requires pyridoxal 5'-phosphate as cofactor.

It catalyses the reaction L-alanine = D-alanine. Its pathway is amino-acid biosynthesis; D-alanine biosynthesis; D-alanine from L-alanine: step 1/1. Functionally, catalyzes the interconversion of L-alanine and D-alanine. May also act on other amino acids. This is Alanine racemase (alr) from Delftia acidovorans (strain DSM 14801 / SPH-1).